Reading from the N-terminus, the 153-residue chain is Sperm surface protein Sp17 (153 aa).

The segment at 74-117 (FKVPSGATESKEAPPEKSEPEKETPQEVVKEQETQVSFVEEVST) is disordered. Residues 82–106 (ESKEAPPEKSEPEKETPQEVVKEQE) show a composition bias toward basic and acidic residues. An IQ domain is found at 122 to 151 (AAAAAVKIQAAFRGHKARKEVKIMKESSIE).

Homodimer. May interact with ROPN1. As to expression, testis- and sperm-specific.

The protein localises to the membrane. Functionally, sperm surface zona pellucida binding protein. Helps to bind spermatozoa to the zona pellucida with high affinity. Might function in binding zona pellucida and carbohydrates. The chain is Sperm surface protein Sp17 (SPA17) from Notamacropus eugenii (Tammar wallaby).